The chain runs to 476 residues: Protein transport protein Sec61 subunit alpha (476 aa).

Over 2-33 (GIKFLEFIKPFCAVLPEIQKPERKIQFREKVL) the chain is Cytoplasmic. Residues 34 to 53 (WTAITLFIFLVCCQIPLFGI) traverse the membrane as a helical segment. The Lumenal portion of the chain corresponds to 54 to 76 (MSSDSADPFYWMRVILASNRGTL). Residues 77-96 (MELGISPIVTSGLIMQLLAG) traverse the membrane as a helical segment. Residues 97–117 (AKIIEVGDTPKDRALFNGAQK) lie on the Cytoplasmic side of the membrane. The chain crosses the membrane as a helical span at residues 118 to 138 (LFGMIITIGQAIVYVMTGMYG). The Lumenal portion of the chain corresponds to 139 to 144 (DPSEMG). Residues 145 to 165 (AGICLLIIIQLFVAGLIVLLL) traverse the membrane as a helical segment. The Cytoplasmic portion of the chain corresponds to 166 to 172 (DELLQKG). Residues 173–193 (YGLGSGISLFIATNICETIVW) form a helical membrane-spanning segment. Topologically, residues 194-240 (KAFSPTTVNTGRGTEFEGAIIALFHLLATRTDKVRALREAFYRQNLP) are lumenal. A helical transmembrane segment spans residues 241 to 261 (NILNLIATVFVFAVVIYFQGF). Topologically, residues 262-288 (RVDLPIKSARYRGQYNTYPIKLFYTSN) are cytoplasmic. The chain crosses the membrane as a helical span at residues 289–309 (IPIILQSALVSNLYVISQMLS). Residues 310–354 (TRFSGNFLVNLLGTWSDATSGGPARAYPVAGLCYYLSPPESFGSV) lie on the Lumenal side of the membrane. Residues 355–375 (LDDPVHAAIYIVFMLGSCAFF) traverse the membrane as a helical segment. Topologically, residues 376 to 420 (SKTWIEVSGSSAKDVAKQLKEQQMVMRGHRETSMVHELNRYIPTA) are cytoplasmic. The helical transmembrane segment at 421-441 (AAFGGLCIGGLSVMADFLGAI) threads the bilayer. At 442-445 (GSGT) the chain is on the lumenal side. A helical transmembrane segment spans residues 446–462 (GILLAVTIIYQYFEIFV). The Cytoplasmic portion of the chain corresponds to 463-476 (KEQSEMGSMGALLF).

It belongs to the SecY/SEC61-alpha family. The SEC61 channel-forming translocon complex consists of channel-forming core components SEC61A1, SEC61B and SEC61G and different auxiliary components such as SEC62 and SEC63. The SEC61 channel associates with the multi-pass translocon (MPT) complex.

It is found in the endoplasmic reticulum membrane. Functionally, component of SEC61 channel-forming translocon complex that mediates transport of signal peptide-containing precursor polypeptides across the endoplasmic reticulum (ER). Forms a ribosome receptor and a gated pore in the ER membrane, both functions required for cotranslational translocation of nascent polypeptides. May cooperate with auxiliary protein SEC62, SEC63 and HSPA5/BiP to enable post-translational transport of small presecretory proteins. The SEC61 channel is also involved in ER membrane insertion of transmembrane proteins: it mediates membrane insertion of the first few transmembrane segments of proteins, while insertion of subsequent transmembrane regions of multi-pass membrane proteins is mediated by the multi-pass translocon (MPT) complex. The sequence is that of Protein transport protein Sec61 subunit alpha (sec61a) from Notothenia angustata (Rockcod).